Consider the following 381-residue polypeptide: Spermidine/putrescine import ATP-binding protein PotA (381 aa).

The ABC transporter domain maps to 19–249; sequence VELRKVFKVF…PESPFVADFI (231 aa). 51–58 serves as a coordination point for ATP; it reads GPSGCGKT.

It belongs to the ABC transporter superfamily. Spermidine/putrescine importer (TC 3.A.1.11.1) family. The complex is composed of two ATP-binding proteins (PotA), two transmembrane proteins (PotB and PotC) and a solute-binding protein (PotD).

It is found in the cell inner membrane. The enzyme catalyses ATP + H2O + polyamine-[polyamine-binding protein]Side 1 = ADP + phosphate + polyamineSide 2 + [polyamine-binding protein]Side 1.. In terms of biological role, part of the ABC transporter complex PotABCD involved in spermidine/putrescine import. Responsible for energy coupling to the transport system. The chain is Spermidine/putrescine import ATP-binding protein PotA from Trichodesmium erythraeum (strain IMS101).